A 340-amino-acid chain; its full sequence is Conidiation-specific protein 13 (340 aa).

A disordered region spans residues A313–V340. The span at T330 to V340 shows a compositional bias: basic residues.

The protein is Conidiation-specific protein 13 (con-13) of Neurospora crassa (strain ATCC 24698 / 74-OR23-1A / CBS 708.71 / DSM 1257 / FGSC 987).